Consider the following 238-residue polypeptide: Aerobic respiration control protein ArcA (238 aa).

Residues 5–118 (HILIVEDELV…ELTIRARNLL (114 aa)) enclose the Response regulatory domain. A 4-aspartylphosphate modification is found at D54. Positions 134-234 (VESYKFNGWE…IHGEGYRFCG (101 aa)) form a DNA-binding region, ompR/PhoB-type.

Phosphorylated by ArcB.

The protein localises to the cytoplasm. Its function is as follows. Member of the two-component regulatory system ArcB/ArcA. Represses a wide variety of aerobic enzymes under anaerobic conditions. It may also be involved in the osmoregulation of envelope proteins. When activated by ArcB, it negatively regulates the expression of genes of aerobic function. Activates the transcription of the plfB operon by binding to its promoter. The protein is Aerobic respiration control protein ArcA (arcA) of Escherichia coli O157:H7.